The following is a 600-amino-acid chain: Proline--tRNA ligase (600 aa).

This sequence belongs to the class-II aminoacyl-tRNA synthetase family. ProS type 1 subfamily. Homodimer.

The protein resides in the cytoplasm. The enzyme catalyses tRNA(Pro) + L-proline + ATP = L-prolyl-tRNA(Pro) + AMP + diphosphate. Catalyzes the attachment of proline to tRNA(Pro) in a two-step reaction: proline is first activated by ATP to form Pro-AMP and then transferred to the acceptor end of tRNA(Pro). As ProRS can inadvertently accommodate and process non-cognate amino acids such as alanine and cysteine, to avoid such errors it has two additional distinct editing activities against alanine. One activity is designated as 'pretransfer' editing and involves the tRNA(Pro)-independent hydrolysis of activated Ala-AMP. The other activity is designated 'posttransfer' editing and involves deacylation of mischarged Ala-tRNA(Pro). The misacylated Cys-tRNA(Pro) is not edited by ProRS. This chain is Proline--tRNA ligase, found in Synechococcus sp. (strain ATCC 27144 / PCC 6301 / SAUG 1402/1) (Anacystis nidulans).